The primary structure comprises 275 residues: MKLIEQHQIFGGSQQVWAHNAQTLQCEMKFAVYLPNNPENRPLGVIYWLSGLTCTEQNFITKSGFQRYAAEHQVIVVAPDTSPRGEQVPNDAAYDLGQGAGFYLNATEQPWATNYQMYDYILNELPDLIEANFPTNGKRSIMGHSMGGHGALVLALRNRERYQSVSAFSPILSPSLVPWGEKAFSAYLGEDREKWQQYDASSLIQQGYKVQGMRIDQGLEDEFLPTQLRTEDFIETCRVANQPVDVRFHKGYDHSYYFIASFIGEHIAYHAEFLK.

Residues Ser145, Asp221, and His254 each act as charge relay system in the active site.

This sequence belongs to the esterase D family.

It carries out the reaction S-formylglutathione + H2O = formate + glutathione + H(+). Functionally, serine hydrolase involved in the detoxification of formaldehyde. Hydrolyzes S-formylglutathione to glutathione and formate. This is S-formylglutathione hydrolase from Haemophilus influenzae (strain ATCC 51907 / DSM 11121 / KW20 / Rd).